Consider the following 221-residue polypeptide: GTP cyclohydrolase 1 (221 aa).

The Zn(2+) site is built by Cys109, His112, and Cys180.

Belongs to the GTP cyclohydrolase I family. In terms of assembly, toroid-shaped homodecamer, composed of two pentamers of five dimers.

The catalysed reaction is GTP + H2O = 7,8-dihydroneopterin 3'-triphosphate + formate + H(+). It participates in cofactor biosynthesis; 7,8-dihydroneopterin triphosphate biosynthesis; 7,8-dihydroneopterin triphosphate from GTP: step 1/1. The chain is GTP cyclohydrolase 1 from Serratia proteamaculans (strain 568).